We begin with the raw amino-acid sequence, 213 residues long: Na(+)-translocating NADH-quinone reductase subunit D (213 aa).

Helical transmembrane passes span 21-41 (PLIA…VNTA), 42-62 (LTMG…VSLL), 77-97 (IIIS…FFDI), 101-121 (LSVF…AESL), 131-151 (FLDG…VSII), 153-173 (EFFG…FYAS), and 183-203 (FGLM…IWGV).

It belongs to the NqrDE/RnfAE family. Composed of six subunits; NqrA, NqrB, NqrC, NqrD, NqrE and NqrF.

It is found in the cell inner membrane. The enzyme catalyses a ubiquinone + n Na(+)(in) + NADH + H(+) = a ubiquinol + n Na(+)(out) + NAD(+). Functionally, NQR complex catalyzes the reduction of ubiquinone-1 to ubiquinol by two successive reactions, coupled with the transport of Na(+) ions from the cytoplasm to the periplasm. NqrA to NqrE are probably involved in the second step, the conversion of ubisemiquinone to ubiquinol. This is Na(+)-translocating NADH-quinone reductase subunit D from Chlamydia abortus (strain DSM 27085 / S26/3) (Chlamydophila abortus).